A 598-amino-acid chain; its full sequence is Aspartate--tRNA(Asp/Asn) ligase (598 aa).

Glutamate 172 is a binding site for L-aspartate. The tract at residues glutamine 196 to lysine 199 is aspartate. An L-aspartate-binding site is contributed by arginine 218. ATP is bound by residues arginine 218–glutamate 220 and glutamine 227. Position 454 (histidine 454) interacts with L-aspartate. Glutamate 488 is a binding site for ATP. Arginine 495 provides a ligand contact to L-aspartate. Residue glycine 540–arginine 543 participates in ATP binding.

The protein belongs to the class-II aminoacyl-tRNA synthetase family. Type 1 subfamily. Homodimer.

Its subcellular location is the cytoplasm. It carries out the reaction tRNA(Asx) + L-aspartate + ATP = L-aspartyl-tRNA(Asx) + AMP + diphosphate. Aspartyl-tRNA synthetase with relaxed tRNA specificity since it is able to aspartylate not only its cognate tRNA(Asp) but also tRNA(Asn). Reaction proceeds in two steps: L-aspartate is first activated by ATP to form Asp-AMP and then transferred to the acceptor end of tRNA(Asp/Asn). The chain is Aspartate--tRNA(Asp/Asn) ligase from Leptothrix cholodnii (strain ATCC 51168 / LMG 8142 / SP-6) (Leptothrix discophora (strain SP-6)).